A 398-amino-acid chain; its full sequence is Exodeoxyribonuclease 7 large subunit (398 aa).

The protein belongs to the XseA family. Heterooligomer composed of large and small subunits.

The protein resides in the cytoplasm. The catalysed reaction is Exonucleolytic cleavage in either 5'- to 3'- or 3'- to 5'-direction to yield nucleoside 5'-phosphates.. Its function is as follows. Bidirectionally degrades single-stranded DNA into large acid-insoluble oligonucleotides, which are then degraded further into small acid-soluble oligonucleotides. The sequence is that of Exodeoxyribonuclease 7 large subunit from Salinibacter ruber (strain DSM 13855 / M31).